The sequence spans 121 residues: Ribonuclease P protein component (121 aa).

This sequence belongs to the RnpA family. In terms of assembly, consists of a catalytic RNA component (M1 or rnpB) and a protein subunit.

It catalyses the reaction Endonucleolytic cleavage of RNA, removing 5'-extranucleotides from tRNA precursor.. Functionally, RNaseP catalyzes the removal of the 5'-leader sequence from pre-tRNA to produce the mature 5'-terminus. It can also cleave other RNA substrates such as 4.5S RNA. The protein component plays an auxiliary but essential role in vivo by binding to the 5'-leader sequence and broadening the substrate specificity of the ribozyme. The protein is Ribonuclease P protein component of Bifidobacterium adolescentis (strain ATCC 15703 / DSM 20083 / NCTC 11814 / E194a).